The following is a 143-amino-acid chain: Lysozyme C (143 aa).

An N-terminal signal peptide occupies residues 1-15 (MKIPVFLLLLALANA). The C-type lysozyme domain occupies 16–143 (KVFQRCEWAR…LSAYIAGCGL (128 aa)). 4 disulfide bridges follow: Cys-21/Cys-141, Cys-45/Cys-129, Cys-79/Cys-94, and Cys-90/Cys-108. Residues Glu-50 and Asp-67 contribute to the active site.

This sequence belongs to the glycosyl hydrolase 22 family. As to quaternary structure, monomer.

It is found in the secreted. It carries out the reaction Hydrolysis of (1-&gt;4)-beta-linkages between N-acetylmuramic acid and N-acetyl-D-glucosamine residues in a peptidoglycan and between N-acetyl-D-glucosamine residues in chitodextrins.. Lysozymes have primarily a bacteriolytic function; those in tissues and body fluids are associated with the monocyte-macrophage system and enhance the activity of immunoagents. The sequence is that of Lysozyme C from Takifugu rubripes (Japanese pufferfish).